A 316-amino-acid polypeptide reads, in one-letter code: Cell surface superoxide dismutase [Cu-Zn] 6 (316 aa).

Residues 1–18 (MIFIPIIILIYLVSIAAS) form the signal peptide. Residues His78, His80, and His96 each contribute to the Cu cation site. Residues His96 and Asp119 each contribute to the Zn(2+) site. Asn128 carries an N-linked (GlcNAc...) asparagine glycan. His159 provides a ligand contact to Cu cation. N-linked (GlcNAc...) asparagine glycans are attached at residues Asn162 and Asn240. The interval 243–263 (DNVYSPEETRPSDQNKKSHRH) is disordered. Over residues 249–258 (EETRPSDQNK) the composition is skewed to basic and acidic residues. N-linked (GlcNAc...) asparagine glycosylation is found at Asn278 and Asn281. The GPI-anchor amidated serine moiety is linked to residue Ser288. Positions 289-316 (SDCLNDGMMVTGSVFGSLVLGIAAGIFV) are cleaved as a propeptide — removed in mature form.

It belongs to the Cu-Zn superoxide dismutase family. Cu cation is required as a cofactor. Zn(2+) serves as cofactor. The GPI-anchor is attached to the protein in the endoplasmic reticulum and serves to target the protein to the cell surface. There, the glucosamine-inositol phospholipid moiety is cleaved off and the GPI-modified mannoprotein is covalently attached via its lipidless GPI glycan remnant to the 1,6-beta-glucan of the outer cell wall layer.

Its subcellular location is the secreted. It is found in the cell wall. It localises to the membrane. The catalysed reaction is 2 superoxide + 2 H(+) = H2O2 + O2. Superoxide dismutases serve to convert damaging superoxide radicals, a key form of ROS, to less damaging hydrogen peroxide that can be converted into water by catalase action. May be involved protection against extracellular stress. The protein is Cell surface superoxide dismutase [Cu-Zn] 6 (SOD6) of Candida albicans (strain SC5314 / ATCC MYA-2876) (Yeast).